The chain runs to 358 residues: Methionine import ATP-binding protein MetN (358 aa).

In terms of domain architecture, ABC transporter spans 14–255 (VVFDAVSKRF…SRHETTRALL (242 aa)). ATP is bound at residue 52–59 (GRSGAGKS).

The protein belongs to the ABC transporter superfamily. Methionine importer (TC 3.A.1.24) family. In terms of assembly, the complex is composed of two ATP-binding proteins (MetN), two transmembrane proteins (MetI) and a solute-binding protein (MetQ).

Its subcellular location is the cell inner membrane. The enzyme catalyses L-methionine(out) + ATP + H2O = L-methionine(in) + ADP + phosphate + H(+). It carries out the reaction D-methionine(out) + ATP + H2O = D-methionine(in) + ADP + phosphate + H(+). Part of the ABC transporter complex MetNIQ involved in methionine import. Responsible for energy coupling to the transport system. The protein is Methionine import ATP-binding protein MetN of Rhizobium meliloti (strain 1021) (Ensifer meliloti).